The chain runs to 242 residues: Neuromodulin (242 aa).

The segment at 1 to 242 (MLCCMRRTKQ…EEREADQEHA (242 aa)) is disordered. Residues Cys-3 and Cys-4 are each lipidated (S-palmitoyl cysteine). Residues 9-32 (KQVEKNDEDQKIEQDGIKPEDKAH) show a composition bias toward basic and acidic residues. One can recognise an IQ domain in the interval 31-60 (AHKAATKIQASFRGHITRKKLKGEKKGDAP). Ser-41 is subject to Phosphoserine; by PHK and PKC. Basic and acidic residues predominate over residues 66 to 84 (ANEKDEAAVAEGTEKKEGE). Low complexity predominate over residues 85-97 (GSTPAEAAPGAGP). Phosphoserine is present on Ser-86. Over residues 98 to 118 (KPEEKTGKAGETPSEEKKGEG) the composition is skewed to basic and acidic residues. Over residues 119 to 134 (APDAATEQAAPQAPAP) the composition is skewed to low complexity. The segment covering 143 to 158 (ETESATKASTDNSPSS) has biased composition (polar residues). Phosphoserine is present on residues Ser-155, Ser-157, and Ser-158. The span at 159 to 171 (KAEDAPAKEEPKQ) shows a compositional bias: basic and acidic residues. A compositionally biased stretch (low complexity) spans 172 to 204 (ADVPAAVTAAAATAPAAEDAAAMATAQPPTETA). Phosphoserine; by CK2 is present on residues Ser-206 and Ser-207. A compositionally biased stretch (basic and acidic residues) spans 209–242 (AEEKIEAVDETKPKDSARQDEGKGEEREADQEHA).

The protein belongs to the neuromodulin family. Identified in a complex containing FGFR4, NCAM1, CDH2, PLCG1, FRS2, SRC, SHC1, GAP43 and CTTN. Interacts (via IQ domain) with calmodulin. Binds calmodulin with a greater affinity in the absence of Ca(2+) than in its presence. Post-translationally, phosphorylated. Phosphorylation of this protein by a protein kinase C is specifically correlated with certain forms of synaptic plasticity. Palmitoylated by ZDHHC3. Palmitoylation is regulated by ARF6 and is essential for plasma membrane association and axonal and dendritic filopodia induction. Deacylated by LYPLA2.

Its subcellular location is the cell membrane. The protein resides in the cell projection. The protein localises to the growth cone membrane. It localises to the synapse. It is found in the filopodium membrane. Its subcellular location is the perikaryon. The protein resides in the dendrite. The protein localises to the axon. It localises to the cytoplasm. Its function is as follows. This protein is associated with nerve growth. It is a major component of the motile 'growth cones' that form the tips of elongating axons. Plays a role in axonal and dendritic filopodia induction. This is Neuromodulin (GAP43) from Bos taurus (Bovine).